The following is a 514-amino-acid chain: MGWLICFCVFAAIIIVALYLRKIHGFLVDDRAPPNLPSLPIIGSLLSINSNSPPHIFFQQLQKKYGDIYSLDMGSNRVIIVNNHHHAKEVLLRKGKIFAGRPRTVTTDILTRDGKDIAFGDYSATWKFHRKIVHGALCMFGEGTASIEKIICREASSMCEILTNLQSSAADLAPELTRAVTNVVCTLCFSSSYKRGDPEFEAMLKYSQGIVDTVAKDSLVDIFPWLQLFPNEDLRILRRCVSIRDKLLQKKYEEHKADFSDNIQRDLFDALLRAKNSSENNNTSTQDVGLTDDHLLMTVGDIFGAGVETTTTVLKWSILYLIHHPQVQRKIQEELDAKIGRDRHPQVNDRGNLPYLEATIREVLRIRPVSPLLIPHVALSDANIGEYTVQKGTRVIVNLWSLHHDEKEWKNPELFNPERFLNEEGNSLCCPSLSYLPFGAGVRVCLGEALAKLELFLFLSWILQRFTLEVPGGQPLPELQGKFRVVLQPQKYKVIARLRTGWEKSLQSQESESG.

Cysteine 445 serves as a coordination point for heme.

Belongs to the cytochrome P450 family. Heme serves as cofactor.

Its subcellular location is the membrane. The enzyme catalyses a C21-steroid + reduced [NADPH--hemoprotein reductase] + O2 = a 17alpha-hydroxy-C21-steroid + oxidized [NADPH--hemoprotein reductase] + H2O + H(+). It carries out the reaction 17alpha-hydroxyprogesterone + reduced [NADPH--hemoprotein reductase] + O2 = androst-4-ene-3,17-dione + acetate + oxidized [NADPH--hemoprotein reductase] + H2O + 2 H(+). It catalyses the reaction 17alpha-hydroxypregnenolone + reduced [NADPH--hemoprotein reductase] + O2 = 3beta-hydroxyandrost-5-en-17-one + acetate + oxidized [NADPH--hemoprotein reductase] + H2O + 2 H(+). It functions in the pathway lipid metabolism; steroid biosynthesis. Its function is as follows. Conversion of pregnenolone and progesterone to their 17-alpha-hydroxylated products and subsequently to dehydroepiandrosterone (DHEA) and androstenedione. Catalyzes both the 17-alpha-hydroxylation and the 17,20-lyase reaction. The chain is Steroid 17-alpha-hydroxylase/17,20 lyase (cyp17a1) from Ictalurus punctatus (Channel catfish).